The chain runs to 129 residues: Follitropin subunit beta (129 aa).

The first 20 residues, 1–20 (MKTLQFFFLFCCWKAICCNS), serve as a signal peptide directing secretion. 6 disulfides stabilise this stretch: Cys-21-Cys-69, Cys-35-Cys-84, Cys-38-Cys-122, Cys-46-Cys-100, Cys-50-Cys-102, and Cys-105-Cys-112. 2 N-linked (GlcNAc...) asparagine glycosylation sites follow: Asn-25 and Asn-42.

It belongs to the glycoprotein hormones subunit beta family. Heterodimer. The active follitropin is a heterodimer composed of an alpha chain/CGA shared with other hormones and a unique beta chain/FSHB shown here.

Its subcellular location is the secreted. Together with the alpha chain CGA constitutes follitropin, the follicle-stimulating hormone, and provides its biological specificity to the hormone heterodimer. Binds FSHR, a G protein-coupled receptor, on target cells to activate downstream signaling pathways. Follitropin is involved in follicle development and spermatogenesis in reproductive organs. This chain is Follitropin subunit beta (FSHB), found in Pan troglodytes (Chimpanzee).